The sequence spans 372 residues: Flap endonuclease 1 (372 aa).

Positions 1 to 105 are N-domain; sequence MGVKGLNQLI…GELEKRLLRR (105 aa). Asp-34 is a binding site for Mg(2+). Residues Arg-47 and Arg-71 each contribute to the DNA site. Positions 87, 159, 161, 180, and 182 each coordinate Mg(2+). The segment at 123-254 is I-domain; it reads EVLKFEKRLV…ATAFKLIKEH (132 aa). Position 159 (Glu-159) interacts with DNA. Residues Gly-232 and Asp-234 each contribute to the DNA site. Asp-234 serves as a coordination point for Mg(2+). Residues 339-347 are interaction with PCNA; sequence VQGRLDGFF.

The protein belongs to the XPG/RAD2 endonuclease family. FEN1 subfamily. In terms of assembly, interacts with PCNA. Three molecules of RAD27 bind to one PCNA trimer with each molecule binding to one PCNA monomer. PCNA stimulates the nuclease activity without altering cleavage specificity. Mg(2+) serves as cofactor. Phosphorylated. Phosphorylation upon DNA damage induces relocalization to the nuclear plasma.

It localises to the nucleus. It is found in the nucleolus. Its subcellular location is the nucleoplasm. The protein resides in the mitochondrion. Structure-specific nuclease with 5'-flap endonuclease and 5'-3' exonuclease activities involved in DNA replication and repair. During DNA replication, cleaves the 5'-overhanging flap structure that is generated by displacement synthesis when DNA polymerase encounters the 5'-end of a downstream Okazaki fragment. It enters the flap from the 5'-end and then tracks to cleave the flap base, leaving a nick for ligation. Also involved in the long patch base excision repair (LP-BER) pathway, by cleaving within the apurinic/apyrimidinic (AP) site-terminated flap. Acts as a genome stabilization factor that prevents flaps from equilibrating into structures that lead to duplications and deletions. Also possesses 5'-3' exonuclease activity on nicked or gapped double-stranded DNA, and exhibits RNase H activity. Also involved in replication and repair of rDNA and in repairing mitochondrial DNA. The sequence is that of Flap endonuclease 1 from Candida dubliniensis (strain CD36 / ATCC MYA-646 / CBS 7987 / NCPF 3949 / NRRL Y-17841) (Yeast).